Here is a 436-residue protein sequence, read N- to C-terminus: DNA primase DnaG (436 aa).

The Toprim domain maps to 169-243; that stretch reads DSIIVVEGRA…DIDYVARAPY (75 aa). Mg(2+)-binding residues include Glu175, Asp217, and Asp219.

The protein belongs to the archaeal DnaG primase family. Forms a ternary complex with MCM helicase and DNA. The cofactor is Mg(2+).

It carries out the reaction ssDNA + n NTP = ssDNA/pppN(pN)n-1 hybrid + (n-1) diphosphate.. Its function is as follows. RNA polymerase that catalyzes the synthesis of short RNA molecules used as primers for DNA polymerase during DNA replication. The sequence is that of DNA primase DnaG from Methanococcus maripaludis (strain DSM 14266 / JCM 13030 / NBRC 101832 / S2 / LL).